Reading from the N-terminus, the 122-residue chain is Small ribosomal subunit protein uS13c (122 aa).

Belongs to the universal ribosomal protein uS13 family. In terms of assembly, part of the 30S ribosomal subunit.

The protein resides in the plastid. Its subcellular location is the chloroplast. Functionally, located at the top of the head of the 30S subunit, it contacts several helices of the 16S rRNA. This Cyanidium caldarium (Red alga) protein is Small ribosomal subunit protein uS13c.